The chain runs to 62 residues: Large ribosomal subunit protein bL28 (62 aa).

Belongs to the bacterial ribosomal protein bL28 family.

The polypeptide is Large ribosomal subunit protein bL28 (Streptococcus mutans serotype c (strain ATCC 700610 / UA159)).